Reading from the N-terminus, the 838-residue chain is Probable beta-glucosidase I (838 aa).

Asparagine 197 carries an N-linked (GlcNAc...) asparagine glycan. The active site involves aspartate 225. In terms of domain architecture, PA14 spans 395-555; that stretch reads DGKKGFKFRV…SQEELISKAA (161 aa). Asparagine 493 carries an N-linked (GlcNAc...) asparagine glycan.

It belongs to the glycosyl hydrolase 3 family.

Its subcellular location is the secreted. The enzyme catalyses Hydrolysis of terminal, non-reducing beta-D-glucosyl residues with release of beta-D-glucose.. Its pathway is glycan metabolism; cellulose degradation. Functionally, beta-glucosidases are one of a number of cellulolytic enzymes involved in the degradation of cellulosic biomass. Catalyzes the last step releasing glucose from the inhibitory cellobiose. The chain is Probable beta-glucosidase I (bglI) from Aspergillus fumigatus (strain ATCC MYA-4609 / CBS 101355 / FGSC A1100 / Af293) (Neosartorya fumigata).